Here is a 109-residue protein sequence, read N- to C-terminus: Small ribosomal subunit protein uS17 (109 aa).

This sequence belongs to the universal ribosomal protein uS17 family. Part of the 30S ribosomal subunit.

One of the primary rRNA binding proteins, it binds specifically to the 5'-end of 16S ribosomal RNA. This is Small ribosomal subunit protein uS17 from Halobacterium salinarum (strain ATCC 29341 / DSM 671 / R1).